A 212-amino-acid chain; its full sequence is Thymidylate kinase (212 aa).

Position 15 to 22 (Gly-15 to Ser-22) interacts with ATP.

This sequence belongs to the thymidylate kinase family.

It catalyses the reaction dTMP + ATP = dTDP + ADP. Its function is as follows. Phosphorylation of dTMP to form dTDP in both de novo and salvage pathways of dTTP synthesis. This is Thymidylate kinase from Chromobacterium violaceum (strain ATCC 12472 / DSM 30191 / JCM 1249 / CCUG 213 / NBRC 12614 / NCIMB 9131 / NCTC 9757 / MK).